Consider the following 229-residue polypeptide: Lipoprotein-releasing system ATP-binding protein LolD (229 aa).

The ABC transporter domain maps to 6–226 (LELKSVDRHY…TLSDGRVVEL (221 aa)). Position 42–49 (42–49 (APSGTGKS)) interacts with ATP.

Belongs to the ABC transporter superfamily. Lipoprotein translocase (TC 3.A.1.125) family. In terms of assembly, the complex is composed of two ATP-binding proteins (LolD) and two transmembrane proteins (LolC and LolE).

The protein resides in the cell inner membrane. Its function is as follows. Part of the ABC transporter complex LolCDE involved in the translocation of mature outer membrane-directed lipoproteins, from the inner membrane to the periplasmic chaperone, LolA. Responsible for the formation of the LolA-lipoprotein complex in an ATP-dependent manner. The protein is Lipoprotein-releasing system ATP-binding protein LolD of Chelativorans sp. (strain BNC1).